The sequence spans 91 residues: Small ribosomal subunit protein uS19 (91 aa).

Belongs to the universal ribosomal protein uS19 family.

Protein S19 forms a complex with S13 that binds strongly to the 16S ribosomal RNA. This is Small ribosomal subunit protein uS19 from Synechococcus sp. (strain WH7803).